We begin with the raw amino-acid sequence, 290 residues long: Enoyl-CoA hydratase, mitochondrial (290 aa).

Residues 1 to 29 (MAALRALLPRACNSLLSPVRCPEFRRFAS) constitute a mitochondrion transit peptide. Substrate is bound at residue 98–101 (ADIK). N6-acetyllysine; alternate occurs at positions 101 and 115. Residues K101 and K115 each carry the N6-succinyllysine; alternate modification. G141 is a substrate binding site. Position 204 is an N6-succinyllysine (K204). The residue at position 211 (K211) is an N6-acetyllysine.

This sequence belongs to the enoyl-CoA hydratase/isomerase family. In terms of assembly, homohexamer; dimer of trimers. As to expression, detected in liver (at protein level).

The protein localises to the mitochondrion matrix. The catalysed reaction is a (3S)-3-hydroxyacyl-CoA = a (2E)-enoyl-CoA + H2O. It catalyses the reaction a (3E)-enoyl-CoA = a 4-saturated (2E)-enoyl-CoA. It carries out the reaction (3E)-hexenoyl-CoA = (2E)-hexenoyl-CoA. The enzyme catalyses (3S)-3-hydroxybutanoyl-CoA = (2E)-butenoyl-CoA + H2O. The catalysed reaction is 3-hydroxyisovaleryl-CoA = 3-methylbut-2-enoyl-CoA + H2O. It catalyses the reaction 3-hydroxypropanoyl-CoA = acryloyl-CoA + H2O. It carries out the reaction 3-hydroxybutanoyl-CoA = (2E)-butenoyl-CoA + H2O. The enzyme catalyses 2-methylpropenoyl-CoA + H2O = (S)-3-hydroxyisobutanoyl-CoA. The catalysed reaction is (3S)-hydroxyhexanoyl-CoA = (2E)-hexenoyl-CoA + H2O. It catalyses the reaction (3S)-hydroxydecanoyl-CoA = (2E)-decenoyl-CoA + H2O. It participates in lipid metabolism; fatty acid beta-oxidation. Its function is as follows. Converts unsaturated trans-2-enoyl-CoA species ((2E)-enoyl-CoA) to the corresponding 3(S)-3-hydroxyacyl-CoA species through addition of a water molecule to the double bond. Catalyzes the hydration of medium- and short-chained fatty enoyl-CoA thioesters from 4 carbons long (C4) up to C16. Has high substrate specificity for crotonyl-CoA ((2E)-butenoyl-CoA) and moderate specificity for acryloyl-CoA, 3-methylcrotonyl-CoA (3-methyl-(2E)-butenoyl-CoA) and methacrylyl-CoA ((2E)-2-methylpropenoyl-CoA). Can bind tiglyl-CoA (2-methylcrotonoyl-CoA), but hydrates only a small amount of this substrate. Plays a key role in the beta-oxidation spiral of short- and medium-chain fatty acid oxidation. At a lower rate than the hydratase reaction, catalyzes the isomerase reaction of trans-3-enoyl-CoA species (such as (3E)-hexenoyl-CoA) to trans-2-enoyl-CoA species (such as (2E)-hexenoyl-CoA), which are subsequently hydrated to 3(S)-3-hydroxyacyl-CoA species (such as (3S)-hydroxyhexanoyl-CoA). The polypeptide is Enoyl-CoA hydratase, mitochondrial (Rattus norvegicus (Rat)).